A 141-amino-acid chain; its full sequence is Nucleoside diphosphate kinase (141 aa).

6 residues coordinate ATP: Lys-11, Phe-59, Arg-87, Thr-93, Arg-104, and Asn-114. Catalysis depends on His-117, which acts as the Pros-phosphohistidine intermediate.

This sequence belongs to the NDK family. In terms of assembly, homotetramer. Mg(2+) serves as cofactor.

Its subcellular location is the cytoplasm. It catalyses the reaction a 2'-deoxyribonucleoside 5'-diphosphate + ATP = a 2'-deoxyribonucleoside 5'-triphosphate + ADP. It carries out the reaction a ribonucleoside 5'-diphosphate + ATP = a ribonucleoside 5'-triphosphate + ADP. In terms of biological role, major role in the synthesis of nucleoside triphosphates other than ATP. The ATP gamma phosphate is transferred to the NDP beta phosphate via a ping-pong mechanism, using a phosphorylated active-site intermediate. The sequence is that of Nucleoside diphosphate kinase from Ralstonia nicotianae (strain ATCC BAA-1114 / GMI1000) (Ralstonia solanacearum).